An 819-amino-acid polypeptide reads, in one-letter code: Leucine--tRNA ligase (819 aa).

The 'HIGH' region motif lies at 40 to 51 (PYPSGAGLHVGH). A 'KMSKS' region motif is present at residues 600–604 (KMSKS). Lysine 603 serves as a coordination point for ATP.

This sequence belongs to the class-I aminoacyl-tRNA synthetase family.

It is found in the cytoplasm. The catalysed reaction is tRNA(Leu) + L-leucine + ATP = L-leucyl-tRNA(Leu) + AMP + diphosphate. This is Leucine--tRNA ligase from Chlamydia trachomatis serovar L2 (strain ATCC VR-902B / DSM 19102 / 434/Bu).